A 344-amino-acid chain; its full sequence is Holliday junction branch migration complex subunit RuvB (344 aa).

Positions 1 to 180 (MSRIVSGEAQ…FGIPVRLEFY (180 aa)) are large ATPase domain (RuvB-L). ATP-binding residues include leucine 19, arginine 20, glycine 61, lysine 64, threonine 65, threonine 66, arginine 170, tyrosine 180, and arginine 217. Threonine 65 is a binding site for Mg(2+). The interval 181-251 (THDELARVLL…AAAAALARLD (71 aa)) is small ATPAse domain (RuvB-S). The interval 254-344 (EVGLDALDRR…AAPPADLFDK (91 aa)) is head domain (RuvB-H). Positions 290, 309, and 314 each coordinate DNA.

The protein belongs to the RuvB family. As to quaternary structure, homohexamer. Forms an RuvA(8)-RuvB(12)-Holliday junction (HJ) complex. HJ DNA is sandwiched between 2 RuvA tetramers; dsDNA enters through RuvA and exits via RuvB. An RuvB hexamer assembles on each DNA strand where it exits the tetramer. Each RuvB hexamer is contacted by two RuvA subunits (via domain III) on 2 adjacent RuvB subunits; this complex drives branch migration. In the full resolvosome a probable DNA-RuvA(4)-RuvB(12)-RuvC(2) complex forms which resolves the HJ.

The protein resides in the cytoplasm. It catalyses the reaction ATP + H2O = ADP + phosphate + H(+). The RuvA-RuvB-RuvC complex processes Holliday junction (HJ) DNA during genetic recombination and DNA repair, while the RuvA-RuvB complex plays an important role in the rescue of blocked DNA replication forks via replication fork reversal (RFR). RuvA specifically binds to HJ cruciform DNA, conferring on it an open structure. The RuvB hexamer acts as an ATP-dependent pump, pulling dsDNA into and through the RuvAB complex. RuvB forms 2 homohexamers on either side of HJ DNA bound by 1 or 2 RuvA tetramers; 4 subunits per hexamer contact DNA at a time. Coordinated motions by a converter formed by DNA-disengaged RuvB subunits stimulates ATP hydrolysis and nucleotide exchange. Immobilization of the converter enables RuvB to convert the ATP-contained energy into a lever motion, pulling 2 nucleotides of DNA out of the RuvA tetramer per ATP hydrolyzed, thus driving DNA branch migration. The RuvB motors rotate together with the DNA substrate, which together with the progressing nucleotide cycle form the mechanistic basis for DNA recombination by continuous HJ branch migration. Branch migration allows RuvC to scan DNA until it finds its consensus sequence, where it cleaves and resolves cruciform DNA. This Phenylobacterium zucineum (strain HLK1) protein is Holliday junction branch migration complex subunit RuvB.